The following is a 176-amino-acid chain: Cytochrome b (176 aa).

3 consecutive transmembrane segments (helical) span residues 33 to 53 (FGSL…FLAM), 77 to 98 (WLLR…YLHI), and 113 to 133 (WNVG…GYVL). The heme b site is built by histidine 83 and histidine 97.

This sequence belongs to the cytochrome b family. In terms of assembly, the cytochrome bc1 complex contains 11 subunits: 3 respiratory subunits (MT-CYB, CYC1 and UQCRFS1), 2 core proteins (UQCRC1 and UQCRC2) and 6 low-molecular weight proteins (UQCRH/QCR6, UQCRB/QCR7, UQCRQ/QCR8, UQCR10/QCR9, UQCR11/QCR10 and a cleavage product of UQCRFS1). This cytochrome bc1 complex then forms a dimer. Heme b serves as cofactor.

The protein localises to the mitochondrion inner membrane. Its function is as follows. Component of the ubiquinol-cytochrome c reductase complex (complex III or cytochrome b-c1 complex) that is part of the mitochondrial respiratory chain. The b-c1 complex mediates electron transfer from ubiquinol to cytochrome c. Contributes to the generation of a proton gradient across the mitochondrial membrane that is then used for ATP synthesis. The protein is Cytochrome b (MT-CYB) of Eumops perotis (Western bonneted bat).